The sequence spans 121 residues: Ribosome-binding factor A (121 aa).

The protein belongs to the RbfA family. In terms of assembly, monomer. Binds 30S ribosomal subunits, but not 50S ribosomal subunits or 70S ribosomes.

It localises to the cytoplasm. Its function is as follows. One of several proteins that assist in the late maturation steps of the functional core of the 30S ribosomal subunit. Associates with free 30S ribosomal subunits (but not with 30S subunits that are part of 70S ribosomes or polysomes). Required for efficient processing of 16S rRNA. May interact with the 5'-terminal helix region of 16S rRNA. This Finegoldia magna (strain ATCC 29328 / DSM 20472 / WAL 2508) (Peptostreptococcus magnus) protein is Ribosome-binding factor A.